The chain runs to 367 residues: Cyclic AMP-responsive element-binding protein 3-like protein 4 (367 aa).

The required for transcriptional activation stretch occupies residues 1–52 (MELGCPELLEPPEDIFSTGSFLELGFNGPPSKVPGLQKSESDDFLNLFIDPN). At 1–267 (MELGCPELLE…QTSSRAAQTS (267 aa)) the chain is on the cytoplasmic side. The segment at 58 to 81 (ETSPGSDSGVSEDPGSPAPQAPSS) is disordered. The bZIP domain occupies 189–252 (ILKKIRRKIR…ISLVAQVHQL (64 aa)). Residues 191–230 (KKIRRKIRNKQSAQDSRRRKKEYIDGLESRVAACSEQNQK) are basic motif. Residues 231–252 (LQRKVQELERQNISLVAQVHQL) are leucine-zipper. The helical; Signal-anchor for type II membrane protein transmembrane segment at 268 to 288 (TCVLILLFSLALIILPSFSPF) threads the bilayer. Topologically, residues 289–367 (QSQPEARSEG…IRGMVHADEM (79 aa)) are lumenal. N338 carries N-linked (GlcNAc...) asparagine glycosylation.

Belongs to the bZIP family. ATF subfamily. Binds DNA as a dimer. Forms a heterodimer with CREM isoform Delta. Post-translationally, controlled by regulated intramembrane proteolysis (RIP). Following ER stress a fragment containing the cytoplasmic transcription factor domain is released by proteolysis. The cleavage seems to be performed sequentially by site-1 and site-2 proteases (PS1 and PS2). PS1 cleavage may be suppressed by a determinant in the C-terminal region.

The protein resides in the endoplasmic reticulum membrane. The protein localises to the nucleus. Functionally, transcriptional activator that may play a role in the unfolded protein response. Binds to the UPR element (UPRE) but not to CRE element. Preferentially binds DNA with to the consensus sequence 5'-T[GT]ACGT[GA][GT]-3' and has transcriptional activation activity from UPRE. Binds to NF-kappa-B site and has transcriptional activation activity from NF-kappa-B-containing regulatory elements. Increases the binding of CREM isoform Delta with CRE. The CREM isoform Delta-CREB3L4 heterodimer functions through CRE but not through UPRE and may recruit HIRA to CRE to regulate histone exchange. The chain is Cyclic AMP-responsive element-binding protein 3-like protein 4 (Creb3l4) from Rattus norvegicus (Rat).